A 363-amino-acid polypeptide reads, in one-letter code: Protein MAK32 (363 aa).

This sequence to S.pombe SpAC4G8.14c.

In terms of biological role, necessary for the structural stability of L-A double-stranded RNA-containing particles. Necessary for growth at 37 degrees Celsius as well as for maintenance of the killer plasmid. This chain is Protein MAK32 (MAK32), found in Saccharomyces cerevisiae (strain ATCC 204508 / S288c) (Baker's yeast).